Reading from the N-terminus, the 398-residue chain is Succinate--CoA ligase [ADP-forming] subunit beta (398 aa).

Residues 9 to 254 (KRLLHEYGAP…LSEEDPKEIE (246 aa)) enclose the ATP-grasp domain. Residues lysine 46, 53-55 (GRG), glutamate 109, alanine 112, and glutamate 117 contribute to the ATP site. Asparagine 209 and aspartate 223 together coordinate Mg(2+). Residues asparagine 274 and 331-333 (GIM) each bind substrate.

This sequence belongs to the succinate/malate CoA ligase beta subunit family. In terms of assembly, heterotetramer of two alpha and two beta subunits. Requires Mg(2+) as cofactor.

The catalysed reaction is succinate + ATP + CoA = succinyl-CoA + ADP + phosphate. It carries out the reaction GTP + succinate + CoA = succinyl-CoA + GDP + phosphate. It functions in the pathway carbohydrate metabolism; tricarboxylic acid cycle; succinate from succinyl-CoA (ligase route): step 1/1. Succinyl-CoA synthetase functions in the citric acid cycle (TCA), coupling the hydrolysis of succinyl-CoA to the synthesis of either ATP or GTP and thus represents the only step of substrate-level phosphorylation in the TCA. The beta subunit provides nucleotide specificity of the enzyme and binds the substrate succinate, while the binding sites for coenzyme A and phosphate are found in the alpha subunit. In Bartonella quintana (strain Toulouse) (Rochalimaea quintana), this protein is Succinate--CoA ligase [ADP-forming] subunit beta.